The primary structure comprises 177 residues: Putative zinc finger protein 826 (177 aa).

Residues 99-114 form a C2H2-type 1; degenerate zinc finger; that stretch reads KTFTWSSSPHKHRRTH. The C2H2-type 2; degenerate zinc-finger motif lies at 120-142; sequence YKCEECGKAFTASSTLSEYKTIH. Residues 148 to 170 form a C2H2-type 3 zinc finger; it reads CKCEECGKAFNWSSDFNKHKRIH.

It localises to the nucleus. Functionally, may be involved in transcriptional regulation. This chain is Putative zinc finger protein 826 (ZNF826P), found in Homo sapiens (Human).